A 711-amino-acid polypeptide reads, in one-letter code: MSTIVIFLAALLACSLLAGWLIKVRSRRRQLPWTNAFADAQTRKLTPEERSAVENYLESLTQVLQVPGPTGASAAPISLALNAESNNVMMLTHAITRYGISTDDPNKWRYYLDSVEVHLPPFWEQYINDENTVELIHTDSLPLVISLNGHTLQEYMQETRSYALQPVPSTQASIRGEESEQIELLNIRKETHEEYALSRPRGLREALLIVASFLMFFFCLITPDVFVPWLAGGALLLLGAGLWGLFAPPAKSSLREIHCLRGTPRRWGLFGENDQEQINNISLGIIDLVYPAHWQPYIAQDLGQQTDIDIYLDRHVVRQGRYLSLHDEVKNFPLQHWLRSTIIAAGSLLVLFMLLFWIPLDMPLKFTLSWMKGAQTIEATSVKQLADAGVRVGDTLRISGTGMCNIRTSGTWSAKTNSPFLPFDCSQIIWNDARSLPLPESELVNKATALTEAVNRQLHPKPEDESRVSASLRSAIQKSGMVLLDDFGDIVLKTADLCSAKDDCVRLKNALVNLGNSKDWDALVKRANAGKLDGVNVLLRPVSAESLDNLVATSTAPFITHETARAAQSLNSPAPGGFLIVSDEGSDFVDQPWPSASLYDYPPQEQWNAFQKLAQMLMHTPFNAEGIVTKIFTDANGTQHIGLHPIPDRSGLWRYLSTTLLLLTMLGSAIYNGVQAWRRYQRHRTRMMEIQAYYESCLNPQLITPSESLIE.

A topological domain (periplasmic) is located at residue Met1. Residues 2 to 22 (STIVIFLAALLACSLLAGWLI) traverse the membrane as a helical segment. Residues 23–204 (KVRSRRRQLP…YALSRPRGLR (182 aa)) lie on the Cytoplasmic side of the membrane. 2 helical membrane-spanning segments follow: residues 205–225 (EALL…TPDV) and 226–246 (FVPW…WGLF). At 247–339 (APPAKSSLRE…KNFPLQHWLR (93 aa)) the chain is on the cytoplasmic side. A helical membrane pass occupies residues 340-360 (STIIAAGSLLVLFMLLFWIPL). Residues 361–655 (DMPLKFTLSW…IPDRSGLWRY (295 aa)) lie on the Periplasmic side of the membrane. Residues 656–676 (LSTTLLLLTMLGSAIYNGVQA) traverse the membrane as a helical segment. Topologically, residues 677-711 (WRRYQRHRTRMMEIQAYYESCLNPQLITPSESLIE) are cytoplasmic.

Belongs to the IgaA family.

The protein resides in the cell inner membrane. This is Putative membrane protein IgaA homolog (yrfF) from Escherichia coli (strain K12).